The primary structure comprises 811 residues: tRNA(Met) cytidine acetyltransferase TmcA (811 aa).

ATP is bound by residues Gln267 and Arg439. The region spanning 473-662 (KKEVYLEEPD…GEFTAIVLKP (190 aa)) is the N-acetyltransferase domain. Acetyl-CoA-binding positions include 589-591 (IAT), Glu629, and Arg636.

It belongs to the TmcA family.

The protein resides in the cytoplasm. The catalysed reaction is cytidine(34) in elongator tRNA(Met) + acetyl-CoA + ATP + H2O = N(4)-acetylcytidine(34) in elongator tRNA(Met) + ADP + phosphate + CoA + H(+). The enzyme catalyses a cytidine in RNA + acetyl-CoA + ATP + H2O = an N(4)-acetylcytidine in RNA + ADP + phosphate + CoA + H(+). It catalyses the reaction a cytidine in tRNA + acetyl-CoA + ATP + H2O = an N(4)-acetylcytidine in tRNA + ADP + phosphate + CoA + H(+). It carries out the reaction a cytidine in mRNA + acetyl-CoA + ATP + H2O = an N(4)-acetylcytidine in mRNA + ADP + phosphate + CoA + H(+). Its function is as follows. Catalyzes the formation of N(4)-acetylcytidine (ac(4)C) at the wobble position of tRNA(Met), by using acetyl-CoA as an acetyl donor and ATP (or GTP). In terms of biological role, catalyzes the formation of 267 N(4)-acetylcytidine (ac(4)C) sites in RNA, almost always on the middle C of a CCG motif. Modifications are found in rRNA, ncRNA, mRNA and tRNA. More acetylation is observed at 95 than at 75 or 85 degrees Celsius. This chain is tRNA(Met) cytidine acetyltransferase TmcA, found in Thermococcus sp. (strain AM4).